A 214-amino-acid chain; its full sequence is Charged multivesicular body protein 2b (214 aa).

Positions 25–55 form a coiled coil; sequence QRTITRDRAALEKQERQLELEIKKMAKTGNK. The segment at 179 to 201 is disordered; it reads AKAPSAARGLPSASTSKASTISD. A compositionally biased stretch (polar residues) spans 190 to 199; it reads SASTSKASTI. The MIT-interacting motif motif lies at 202–212; it reads EEIERQLKALG.

Belongs to the SNF7 family. In terms of assembly, probable core component of the endosomal sorting required for transport complex III (ESCRT-III). ESCRT-III components are thought to multimerize to form a flat lattice on the perimeter membrane of the endosome.

The protein resides in the cytoplasm. Its subcellular location is the cytosol. It localises to the late endosome membrane. In terms of biological role, probable core component of the endosomal sorting required for transport complex III (ESCRT-III) which is involved in multivesicular bodies (MVBs) formation and sorting of endosomal cargo proteins into MVBs. MVBs contain intraluminal vesicles (ILVs) that are generated by invagination and scission from the limiting membrane of the endosome and mostly are delivered to lysosomes enabling degradation of membrane proteins, such as stimulated growth factor receptors, lysosomal enzymes and lipids. The polypeptide is Charged multivesicular body protein 2b (CHMP2B) (Gallus gallus (Chicken)).